A 340-amino-acid polypeptide reads, in one-letter code: Fructose-1,6-bisphosphatase class 1 (340 aa).

Mg(2+)-binding residues include glutamate 107, aspartate 126, leucine 128, and aspartate 129. Asparagine 215 contributes to the substrate binding site. Glutamate 287 provides a ligand contact to Mg(2+).

The protein belongs to the FBPase class 1 family. In terms of assembly, homotetramer. Mg(2+) serves as cofactor.

It is found in the cytoplasm. The catalysed reaction is beta-D-fructose 1,6-bisphosphate + H2O = beta-D-fructose 6-phosphate + phosphate. It participates in carbohydrate biosynthesis; gluconeogenesis. The sequence is that of Fructose-1,6-bisphosphatase class 1 from Brucella ovis (strain ATCC 25840 / 63/290 / NCTC 10512).